The primary structure comprises 363 residues: Mitogen-activated protein kinase 4 (363 aa).

The Protein kinase domain occupies 30 to 318 (YDLVKVVGFG…AKQVMEHPYF (289 aa)). ATP is bound by residues 36–44 (VGFGACGTV) and lysine 59. Aspartate 156 acts as the Proton acceptor in catalysis. Serine 186 and serine 187 each carry phosphoserine. Threonine 190 carries the post-translational modification Phosphothreonine; by MKK5. A TQY motif is present at residues 190 to 192 (TQY). Tyrosine 192 carries the phosphotyrosine; by MKK5 modification.

The protein belongs to the protein kinase superfamily. CMGC Ser/Thr protein kinase family. MAP kinase subfamily. It depends on Mg(2+) as a cofactor. In terms of processing, dually phosphorylated on Thr-190 and Tyr-192, which activates the enzyme.

It catalyses the reaction L-seryl-[protein] + ATP = O-phospho-L-seryl-[protein] + ADP + H(+). It carries out the reaction L-threonyl-[protein] + ATP = O-phospho-L-threonyl-[protein] + ADP + H(+). Functionally, essential for the two main proliferating life stages, the promastigotes and amastigotes, of the parasite. This chain is Mitogen-activated protein kinase 4, found in Leishmania mexicana.